The primary structure comprises 396 residues: Elongation factor Tu (396 aa).

The tr-type G domain occupies 10–206; it reads KPHCNIGTIG…EVDAYIPQPE (197 aa). The interval 19–26 is G1; sequence GHVDHGKT. 19-26 serves as a coordination point for GTP; the sequence is GHVDHGKT. Threonine 26 serves as a coordination point for Mg(2+). The segment at 60–64 is G2; that stretch reads GITIS. The tract at residues 81–84 is G3; it reads DCPG. GTP contacts are provided by residues 81–85 and 136–139; these read DCPGH and NKCD. A G4 region spans residues 136-139; the sequence is NKCD. The segment at 174–176 is G5; the sequence is SAL.

The protein belongs to the TRAFAC class translation factor GTPase superfamily. Classic translation factor GTPase family. EF-Tu/EF-1A subfamily. In terms of assembly, monomer.

Its subcellular location is the cytoplasm. It catalyses the reaction GTP + H2O = GDP + phosphate + H(+). Functionally, GTP hydrolase that promotes the GTP-dependent binding of aminoacyl-tRNA to the A-site of ribosomes during protein biosynthesis. The polypeptide is Elongation factor Tu (Paramagnetospirillum magneticum (strain ATCC 700264 / AMB-1) (Magnetospirillum magneticum)).